Consider the following 92-residue polypeptide: Beta-2-microglobulin (92 aa).

An Ig-like C1-type domain is found at proline 2–asparagine 91. Cysteine 22 and cysteine 77 form a disulfide bridge.

The protein belongs to the beta-2-microglobulin family. In terms of assembly, heterodimer of an alpha chain and a beta chain. Beta-2-microglobulin is the beta-chain of major histocompatibility complex class I molecules.

The protein localises to the secreted. Component of the class I major histocompatibility complex (MHC). Involved in the presentation of peptide antigens to the immune system. The sequence is that of Beta-2-microglobulin (B2m) from Mus caroli (Ryukyu mouse).